Consider the following 42-residue polypeptide: Photosystem II reaction center protein J (42 aa).

A helical transmembrane segment spans residues 10–30 (IPLWLVGTVAGILVLGLVGLF).

This sequence belongs to the PsbJ family. As to quaternary structure, PSII is composed of 1 copy each of membrane proteins PsbA, PsbB, PsbC, PsbD, PsbE, PsbF, PsbH, PsbI, PsbJ, PsbK, PsbL, PsbM, PsbT, PsbX, PsbY, PsbZ, Psb30/Ycf12, at least 3 peripheral proteins of the oxygen-evolving complex and a large number of cofactors. It forms dimeric complexes.

The protein localises to the plastid. It localises to the chloroplast thylakoid membrane. One of the components of the core complex of photosystem II (PSII). PSII is a light-driven water:plastoquinone oxidoreductase that uses light energy to abstract electrons from H(2)O, generating O(2) and a proton gradient subsequently used for ATP formation. It consists of a core antenna complex that captures photons, and an electron transfer chain that converts photonic excitation into a charge separation. This chain is Photosystem II reaction center protein J, found in Staurastrum punctulatum (Green alga).